Here is a 139-residue protein sequence, read N- to C-terminus: Acidic phospholipase A2 S1E6-c (139 aa).

Positions 1–16 (MRTLWILAVLLVGVEG) are cleaved as a signal peptide. 7 disulfides stabilise this stretch: Cys-42-Cys-132, Cys-44-Cys-60, Cys-59-Cys-111, Cys-65-Cys-139, Cys-66-Cys-104, Cys-73-Cys-97, and Cys-91-Cys-102. Ca(2+) is bound by residues Tyr-43, Gly-45, and Gly-47. The active site involves His-63. Position 64 (Asp-64) interacts with Ca(2+). Asp-105 is a catalytic residue.

It belongs to the phospholipase A2 family. Group II subfamily. D49 sub-subfamily. Homodimer. Ca(2+) is required as a cofactor. Expressed by the venom gland.

Its subcellular location is the secreted. It carries out the reaction a 1,2-diacyl-sn-glycero-3-phosphocholine + H2O = a 1-acyl-sn-glycero-3-phosphocholine + a fatty acid + H(+). Snake venom phospholipase A2 (PLA2) that inhibits ADP-induced platelet aggregation. PLA2 catalyzes the calcium-dependent hydrolysis of the 2-acyl groups in 3-sn-phosphoglycerides. The polypeptide is Acidic phospholipase A2 S1E6-c (Calloselasma rhodostoma (Malayan pit viper)).